Reading from the N-terminus, the 459-residue chain is Alpha,alpha-trehalose-phosphate synthase [UDP-forming] (459 aa).

2 residues coordinate D-glucose 6-phosphate: tyrosine 86 and aspartate 140. Residues arginine 262 and lysine 267 each coordinate UDP. Arginine 262 and lysine 267 together coordinate UDP-alpha-D-glucose. Residue arginine 300 participates in D-glucose 6-phosphate binding. UDP-alpha-D-glucose is bound at residue 361–369 (DGMNLVALE). A UDP-binding site is contributed by 365–369 (LVALE).

Belongs to the glycosyltransferase 20 family. In terms of assembly, component of the trehalose synthase complex.

The protein resides in the cytoplasm. It carries out the reaction D-glucose 6-phosphate + UDP-alpha-D-glucose = alpha,alpha-trehalose 6-phosphate + UDP + H(+). Its function is as follows. Synthase catalytic subunit of the trehalose synthase complex that catalyzes the production of trehalose from glucose-6-phosphate and UDP-alpha-D-glucose in a two step process. Can function independently of the complex. This Encephalitozoon cuniculi (strain GB-M1) (Microsporidian parasite) protein is Alpha,alpha-trehalose-phosphate synthase [UDP-forming] (TPS1).